Here is a 122-residue protein sequence, read N- to C-terminus: Small ribosomal subunit protein uS13 (122 aa).

The segment at 95–122 (GLPVRGQRTHTNARTRKGPAKSIAGKKK) is disordered.

Belongs to the universal ribosomal protein uS13 family. In terms of assembly, part of the 30S ribosomal subunit. Forms a loose heterodimer with protein S19. Forms two bridges to the 50S subunit in the 70S ribosome.

In terms of biological role, located at the top of the head of the 30S subunit, it contacts several helices of the 16S rRNA. In the 70S ribosome it contacts the 23S rRNA (bridge B1a) and protein L5 of the 50S subunit (bridge B1b), connecting the 2 subunits; these bridges are implicated in subunit movement. Contacts the tRNAs in the A and P-sites. The chain is Small ribosomal subunit protein uS13 from Nitrobacter hamburgensis (strain DSM 10229 / NCIMB 13809 / X14).